Reading from the N-terminus, the 274-residue chain is Formamidopyrimidine-DNA glycosylase (274 aa).

Proline 2 (schiff-base intermediate with DNA) is an active-site residue. Glutamate 3 acts as the Proton donor in catalysis. Catalysis depends on lysine 59, which acts as the Proton donor; for beta-elimination activity. Residues histidine 93, arginine 112, and lysine 153 each coordinate DNA. Residues 238–272 (QVHTKFNKPCPNCGELIQKIKLGGRGTYFCKKCQQ) form an FPG-type zinc finger. Catalysis depends on arginine 262, which acts as the Proton donor; for delta-elimination activity.

Belongs to the FPG family. As to quaternary structure, monomer. The cofactor is Zn(2+).

The catalysed reaction is Hydrolysis of DNA containing ring-opened 7-methylguanine residues, releasing 2,6-diamino-4-hydroxy-5-(N-methyl)formamidopyrimidine.. The enzyme catalyses 2'-deoxyribonucleotide-(2'-deoxyribose 5'-phosphate)-2'-deoxyribonucleotide-DNA = a 3'-end 2'-deoxyribonucleotide-(2,3-dehydro-2,3-deoxyribose 5'-phosphate)-DNA + a 5'-end 5'-phospho-2'-deoxyribonucleoside-DNA + H(+). Involved in base excision repair of DNA damaged by oxidation or by mutagenic agents. Acts as a DNA glycosylase that recognizes and removes damaged bases. Has a preference for oxidized purines, such as 7,8-dihydro-8-oxoguanine (8-oxoG). Has AP (apurinic/apyrimidinic) lyase activity and introduces nicks in the DNA strand. Cleaves the DNA backbone by beta-delta elimination to generate a single-strand break at the site of the removed base with both 3'- and 5'-phosphates. The polypeptide is Formamidopyrimidine-DNA glycosylase (Mycoplasma mobile (strain ATCC 43663 / 163K / NCTC 11711) (Mesomycoplasma mobile)).